Reading from the N-terminus, the 213-residue chain is Ras-related protein Rab-4B (213 aa).

N-acetylalanine is present on alanine 2. The GDP site is built by glycine 18, threonine 19, glycine 20, lysine 21, serine 22, and cysteine 23. GTP-binding residues include glycine 18, threonine 19, glycine 20, lysine 21, serine 22, cysteine 23, serine 37, histidine 39, and threonine 40. Serine 22 provides a ligand contact to Mg(2+). A Switch 1 motif is present at residues 39 to 44; sequence HTIGVE. Mg(2+) contacts are provided by threonine 40 and aspartate 63. Positions 65 to 74 match the Switch 2 motif; it reads AGQERFRSVT. Glycine 66 is a GTP binding site. Glutamine 67 carries the post-translational modification 5-glutamyl serotonin. GDP-binding residues include asparagine 121, lysine 122, aspartate 124, alanine 152, and leucine 153. GTP contacts are provided by asparagine 121, lysine 122, aspartate 124, alanine 152, and leucine 153. 2 positions are modified to phosphoserine: serine 185 and serine 193. S-geranylgeranyl cysteine attachment occurs at residues cysteine 211 and cysteine 213. Cysteine 213 is subject to Cysteine methyl ester.

The protein belongs to the small GTPase superfamily. Rab family. Interacts (GTP-bound form) with RUFY1; the interaction allows endosomal tethering and fusion. The cofactor is Mg(2+). In terms of processing, serotonylation of Gln-67 by TGM2 during activation and aggregation of platelets leads to constitutive activation of GTPase activity.

Its subcellular location is the cell membrane. It localises to the early endosome membrane. The enzyme catalyses GTP + H2O = GDP + phosphate + H(+). Regulated by guanine nucleotide exchange factors (GEFs) which promote the exchange of bound GDP for free GTP. Regulated by GTPase activating proteins (GAPs) which increase the GTP hydrolysis activity. Inhibited by GDP dissociation inhibitors (GDIs). In terms of biological role, the small GTPases Rab are key regulators of intracellular membrane trafficking, from the formation of transport vesicles to their fusion with membranes. Rabs cycle between an inactive GDP-bound form and an active GTP-bound form that is able to recruit to membranes different set of downstream effectors directly responsible for vesicle formation, movement, tethering and fusion. RAB4B mediates endosomal tethering and fusion through the interaction with RUFY1 and RAB14. Acts as a regulator of platelet alpha-granule release during activation and aggregation of platelets. This Mus musculus (Mouse) protein is Ras-related protein Rab-4B.